A 125-amino-acid chain; its full sequence is MARIAGIDLPREKRIVVGLTYIFGIGNSLSKLILKKAGIDESIRVKDLNESQEAAIRKTLEETAKVEGDLRSEIQLNIKRLMDIGCYRGLRHRRGLPVNGQRTRTNARTRKGGKKTVANKKKVTK.

A disordered region spans residues 95 to 125; the sequence is GLPVNGQRTRTNARTRKGGKKTVANKKKVTK. A compositionally biased stretch (basic residues) spans 105–125; it reads TNARTRKGGKKTVANKKKVTK.

It belongs to the universal ribosomal protein uS13 family. In terms of assembly, part of the 30S ribosomal subunit. Forms a loose heterodimer with protein S19. Forms two bridges to the 50S subunit in the 70S ribosome.

Located at the top of the head of the 30S subunit, it contacts several helices of the 16S rRNA. In the 70S ribosome it contacts the 23S rRNA (bridge B1a) and protein L5 of the 50S subunit (bridge B1b), connecting the 2 subunits; these bridges are implicated in subunit movement. Contacts the tRNAs in the A and P-sites. In Leptospira interrogans serogroup Icterohaemorrhagiae serovar copenhageni (strain Fiocruz L1-130), this protein is Small ribosomal subunit protein uS13.